The sequence spans 107 residues: Thiosulfate sulfurtransferase GlpE (107 aa).

A Rhodanese domain is found at Ala-17 to Ser-105. Cys-65 acts as the Cysteine persulfide intermediate in catalysis.

It belongs to the GlpE family.

Its subcellular location is the cytoplasm. The catalysed reaction is thiosulfate + hydrogen cyanide = thiocyanate + sulfite + 2 H(+). The enzyme catalyses thiosulfate + [thioredoxin]-dithiol = [thioredoxin]-disulfide + hydrogen sulfide + sulfite + 2 H(+). Functionally, transferase that catalyzes the transfer of sulfur from thiosulfate to thiophilic acceptors such as cyanide or dithiols. May function in a CysM-independent thiosulfate assimilation pathway by catalyzing the conversion of thiosulfate to sulfite, which can then be used for L-cysteine biosynthesis. This Erwinia tasmaniensis (strain DSM 17950 / CFBP 7177 / CIP 109463 / NCPPB 4357 / Et1/99) protein is Thiosulfate sulfurtransferase GlpE.